We begin with the raw amino-acid sequence, 670 residues long: DNA ligase (670 aa).

Residues 32 to 36, 81 to 82, and Glu113 each bind NAD(+); these read DAEYD and SL. Catalysis depends on Lys115, which acts as the N6-AMP-lysine intermediate. NAD(+) contacts are provided by Arg136, Glu173, Lys290, and Lys314. Zn(2+) is bound by residues Cys408, Cys411, Cys426, and Cys432. The BRCT domain occupies 592–670; sequence EIDSPFAGKT…EAEMIRLLGE (79 aa).

This sequence belongs to the NAD-dependent DNA ligase family. LigA subfamily. Mg(2+) serves as cofactor. Requires Mn(2+) as cofactor.

It catalyses the reaction NAD(+) + (deoxyribonucleotide)n-3'-hydroxyl + 5'-phospho-(deoxyribonucleotide)m = (deoxyribonucleotide)n+m + AMP + beta-nicotinamide D-nucleotide.. DNA ligase that catalyzes the formation of phosphodiester linkages between 5'-phosphoryl and 3'-hydroxyl groups in double-stranded DNA using NAD as a coenzyme and as the energy source for the reaction. It is essential for DNA replication and repair of damaged DNA. This Yersinia pseudotuberculosis serotype IB (strain PB1/+) protein is DNA ligase.